A 2723-amino-acid chain; its full sequence is Zinc finger protein 292 (2723 aa).

The segment at 569-591 adopts a C2H2-type 1 zinc-finger fold; it reads YSCPICAKNFNSKETFVPHVTLH. The segment at 608-633 is disordered; it reads RLGRPPKITTTNENQKTNTVAKQEQR. A compositionally biased stretch (polar residues) spans 615 to 629; it reads ITTTNENQKTNTVAK. Residue Ser654 is modified to Phosphoserine. 5 consecutive C2H2-type zinc fingers follow at residues 681-705, 722-744, 750-774, 779-803, and 807-831; these read FNCP…VKGH, VICQ…LQMH, YICI…RKEH, AKCM…EAQH, and YTCK…LDDH. Positions 825 to 834 are enriched in basic and acidic residues; it reads EKHLDDHSTP. The interval 825–860 is disordered; sequence EKHLDDHSTPPEKVLPPEAQLNSSGDSIQPSEVNQN. The span at 844–860 shows a compositional bias: polar residues; the sequence is QLNSSGDSIQPSEVNQN. The C2H2-type 7 zinc finger occupies 1098-1123; the sequence is FSCQVEGCTRTYNSSQSIGKHMKTAH. An N6-acetyllysine modification is found at Lys1117. At Ser1159 the chain carries Phosphoserine. A disordered region spans residues 1331–1364; that stretch reads SSTNAQQSAPEKVKKDRGRGPNGKERKPKHNKRA. Positions 1341 to 1355 are enriched in basic and acidic residues; that stretch reads EKVKKDRGRGPNGKE. A C2H2-type 8; degenerate zinc finger spans residues 1375 to 1397; the sequence is FICSRCYRAFTNPRSLGGHLSKR. Over residues 1588-1627 the composition is skewed to polar residues; it reads SFPNSGGPSQNFTSNSSRVSVISGPQNTRSSHLNKKGNSA. Residues 1588-1634 form a disordered region; the sequence is SFPNSGGPSQNFTSNSSRVSVISGPQNTRSSHLNKKGNSASKRRKKV. Positions 1827–1854 form a coiled coil; sequence QSEVSHKEDQIQEILEGLQKLKLENDLS. C2H2-type zinc fingers lie at residues 1902–1927 and 1947–1972; these read FVCQ…GKIH and FKCV…QLVH. A disordered region spans residues 1986–2023; the sequence is RPYGRKSQSENVPASRSTQVKKQLAMTEENKKESQPAL. Over residues 1994-2006 the composition is skewed to polar residues; it reads SENVPASRSTQVK. Lys2042 bears the N6-acetyllysine mark. The segment at 2074-2103 is disordered; sequence NTQTKGRKIRRHKKEKEEKKRKKPVSQSLE. The segment covering 2078–2097 has biased composition (basic residues); the sequence is KGRKIRRHKKEKEEKKRKKP. 4 C2H2-type zinc fingers span residues 2114 to 2139, 2172 to 2197, 2216 to 2241, and 2256 to 2281; these read YRCV…QAVH, FRCQ…MKLH, FPCD…EADH, and YKCD…FNKH. Basic residues-rich tracts occupy residues 2285-2294 and 2312-2322; these read HKAHLIRPRR and KSKHRGTKHSR. The segment at 2285-2345 is disordered; it reads HKAHLIRPRR…KKKNNLENKN (61 aa). Residues 2386 to 2410 form a C2H2-type 15 zinc finger; that stretch reads YPCMIKGCTSVVTSESNIIRHYKCH. Over residues 2441 to 2452 the composition is skewed to basic and acidic residues; sequence QEGAKNDVKDSD. Disordered stretches follow at residues 2441 to 2480, 2530 to 2564, and 2606 to 2631; these read QEGA…EKDE, LKRV…VRKE, and QKKN…RKNI. The span at 2453-2470 shows a compositional bias: polar residues; it reads TCVSESNDNSRTTATVSQ. Residues 2606–2615 are compositionally biased toward basic and acidic residues; that stretch reads QKKNTDKDHP.

This sequence belongs to the krueppel C2H2-type zinc-finger protein family.

It localises to the nucleus. Functionally, may be involved in transcriptional regulation. In Homo sapiens (Human), this protein is Zinc finger protein 292 (ZNF292).